Consider the following 313-residue polypeptide: Acetyl-coenzyme A carboxylase carboxyl transferase subunit alpha (313 aa).

The CoA carboxyltransferase C-terminal domain maps to 42 to 292 (KSDKLLRDTY…GAAIGEELDK (251 aa)).

It belongs to the AccA family. As to quaternary structure, acetyl-CoA carboxylase is a heterohexamer composed of biotin carboxyl carrier protein (AccB), biotin carboxylase (AccC) and two subunits each of ACCase subunit alpha (AccA) and ACCase subunit beta (AccD).

Its subcellular location is the cytoplasm. It catalyses the reaction N(6)-carboxybiotinyl-L-lysyl-[protein] + acetyl-CoA = N(6)-biotinyl-L-lysyl-[protein] + malonyl-CoA. It participates in lipid metabolism; malonyl-CoA biosynthesis; malonyl-CoA from acetyl-CoA: step 1/1. Functionally, component of the acetyl coenzyme A carboxylase (ACC) complex. First, biotin carboxylase catalyzes the carboxylation of biotin on its carrier protein (BCCP) and then the CO(2) group is transferred by the carboxyltransferase to acetyl-CoA to form malonyl-CoA. This is Acetyl-coenzyme A carboxylase carboxyl transferase subunit alpha from Rhizorhabdus wittichii (strain DSM 6014 / CCUG 31198 / JCM 15750 / NBRC 105917 / EY 4224 / RW1) (Sphingomonas wittichii).